The sequence spans 529 residues: E3 ubiquitin-protein ligase arih1 (529 aa).

Disordered stretches follow at residues 1-29 (MDSD…HEDE) and 46-69 (ERAG…EEDE). Residues 51 to 64 (CGEGGGSALGPGPG) show a composition bias toward gly residues. Residues 77 to 125 (TAEQILQHMVECIREVNEVIQNPATITRILLSHFNWDKEKLMERYFDGN) form a UBA-like region. A TRIAD supradomain region spans residues 154-365 (LDMPCQICYL…SAWYNCNRYN (212 aa)). Residues Cys158, Cys161, Cys175, His177, Cys180, Cys183, Cys203, Cys208, Cys248, Cys253, Cys269, Cys271, Cys276, Cys279, His284, Cys289, Cys316, and Cys319 each contribute to the Zn(2+) site. The RING-type 1 zinc finger occupies 158–208 (CQICYLNYPNSYFTGLECGHKFCMQCWGEYLTTKIIEEGMGQTISCPAHGC). An IBR-type zinc finger spans residues 228–289 (LKYQHLITNS…GENWHDPVKC (62 aa)). The RING-type 2; atypical zinc finger occupies 316-347 (CPKCHVTIEKDGGCNHMVCRNQNCKAEFCWVC). The active site involves Cys329. Zn(2+)-binding residues include Cys334, Cys339, Cys344, Cys347, His354, and Cys361. Residues 380–529 (RAALQRYLFY…EKDLWEYIED (150 aa)) are ariadne domain.

It belongs to the RBR family. Ariadne subfamily. Interacts (via the first RING-type zinc finger) with ube2l3. Associates with cullin-RING ubiquitin ligase (CRL) complexes containing neddylated cullin.

The protein resides in the cytoplasm. It is found in the nucleus. It catalyses the reaction [E2 ubiquitin-conjugating enzyme]-S-ubiquitinyl-L-cysteine + [acceptor protein]-L-lysine = [E2 ubiquitin-conjugating enzyme]-L-cysteine + [acceptor protein]-N(6)-ubiquitinyl-L-lysine.. It participates in protein modification; protein ubiquitination. With respect to regulation, autoinhibited by the ariadne domain, which masks the second RING-type zinc finger that contains the active site and inhibits the E3 activity. Inhibition is relieved upon binding to neddylated cullin-RING ubiquitin ligase complexes, which activate the E3 ligase activity of ARIH1. Functionally, E3 ubiquitin-protein ligase, which catalyzes ubiquitination of target proteins together with ubiquitin-conjugating enzyme E2 ube2l3. Acts as an atypical E3 ubiquitin-protein ligase by working together with cullin-RING ubiquitin ligase (CRL) complexes and initiating ubiquitination of CRL substrates: associates with CRL complexes and specifically mediates addition of the first ubiquitin on CRLs targets. The initial ubiquitin is then elongated. E3 ubiquitin-protein ligase activity is activated upon binding to neddylated cullin-RING ubiquitin ligase complexes. The chain is E3 ubiquitin-protein ligase arih1 (arih1) from Xenopus laevis (African clawed frog).